The primary structure comprises 288 residues: Cell division protein DivIB (288 aa).

The Cytoplasmic segment spans residues 1-25 (MEKVIDITERVPAMKKRRRRRTNFK). The chain crosses the membrane as a helical span at residues 26-46 (FLALVTIFLFIIIILLYFQLP). The Extracellular portion of the chain corresponds to 47–288 (YSDIKKIDIK…LEEQNEEEPE (242 aa)). Positions 48-116 (SDIKKIDIKG…NEVQITVEEW (69 aa)) constitute a POTRA domain. A compositionally biased stretch (basic and acidic residues) spans 253–263 (LIKENTEKTEE). Residues 253–288 (LIKENTEKTEEPAEETENADTEEGGQLEEQNEEEPE) are disordered. Over residues 264–288 (PAEETENADTEEGGQLEEQNEEEPE) the composition is skewed to acidic residues.

Belongs to the FtsQ/DivIB family. DivIB subfamily.

It is found in the cell membrane. Functionally, cell division protein that may be involved in stabilizing or promoting the assembly of the division complex. In Solibacillus silvestris (strain StLB046) (Bacillus silvestris), this protein is Cell division protein DivIB.